Reading from the N-terminus, the 2053-residue chain is Integrator complex subunit 1 (2053 aa).

Disordered regions lie at residues 36–58 and 249–285; these read KILPIKGMSSSDRKREASTALAS and SLPSGQAHRDSMTVDDDSGDNSTQSLDASPLNTESEP. Over residues 268-283 the composition is skewed to polar residues; the sequence is DNSTQSLDASPLNTES. A helical membrane pass occupies residues 708-728; sequence LAIIAFYWKAWLILLMISAHN.

The protein belongs to the Integrator subunit 1 family. Belongs to the multiprotein complex Integrator, at least composed of IntS1, IntS2, IntS3, IntS4, omd/IntS5, IntS6, defl/IntS7, IntS8, IntS9, IntS10, IntS11, IntS12, asun/IntS13, IntS14 and IntS15. The core complex associates with protein phosphatase 2A subunits mts/PP2A and Pp2A-29B, to form the Integrator-PP2A (INTAC) complex. Within the complex, interacts with IntS12 and IntS9. Interaction with IntS12 is likely to be important for promoting 3'-end processing of snRNAs. Interacts with Mediator complex members Cdk8 and CycC.

It localises to the nucleus membrane. The protein resides in the nucleus. Functionally, component of the integrator complex, a multiprotein complex that terminates RNA polymerase II (Pol II) transcription in the promoter-proximal region of genes. The integrator complex provides a quality checkpoint during transcription elongation by driving premature transcription termination of transcripts that are unfavorably configured for transcriptional elongation: the complex terminates transcription by (1) catalyzing dephosphorylation of the C-terminal domain (CTD) of Pol II subunit Polr2A/Rbp1 and Spt5, and (2) degrading the exiting nascent RNA transcript via endonuclease activity. The integrator complex is also involved in the 3'-end processing of the U7 snRNA, and also the spliceosomal snRNAs U1, U2, U4 and U5. Required for the normal expression of the Integrator complex component IntS12. The chain is Integrator complex subunit 1 from Drosophila melanogaster (Fruit fly).